The chain runs to 538 residues: Bifunctional purine biosynthesis protein PurH (538 aa).

One can recognise an MGS-like domain in the interval 6 to 158; it reads KHIPAPDLHR…KNHAYVATVV (153 aa).

It belongs to the PurH family.

It catalyses the reaction (6R)-10-formyltetrahydrofolate + 5-amino-1-(5-phospho-beta-D-ribosyl)imidazole-4-carboxamide = 5-formamido-1-(5-phospho-D-ribosyl)imidazole-4-carboxamide + (6S)-5,6,7,8-tetrahydrofolate. The enzyme catalyses IMP + H2O = 5-formamido-1-(5-phospho-D-ribosyl)imidazole-4-carboxamide. It functions in the pathway purine metabolism; IMP biosynthesis via de novo pathway; 5-formamido-1-(5-phospho-D-ribosyl)imidazole-4-carboxamide from 5-amino-1-(5-phospho-D-ribosyl)imidazole-4-carboxamide (10-formyl THF route): step 1/1. It participates in purine metabolism; IMP biosynthesis via de novo pathway; IMP from 5-formamido-1-(5-phospho-D-ribosyl)imidazole-4-carboxamide: step 1/1. In Brucella ovis (strain ATCC 25840 / 63/290 / NCTC 10512), this protein is Bifunctional purine biosynthesis protein PurH.